Reading from the N-terminus, the 93-residue chain is Large ribosomal subunit protein uL23c (93 aa).

The protein belongs to the universal ribosomal protein uL23 family. Part of the 50S ribosomal subunit.

The protein resides in the plastid. The protein localises to the chloroplast. Functionally, binds to 23S rRNA. This Fragaria ananassa (Strawberry) protein is Large ribosomal subunit protein uL23c (rpl23).